Here is a 1077-residue protein sequence, read N- to C-terminus: Error-prone DNA polymerase (1077 aa).

Belongs to the DNA polymerase type-C family. DnaE2 subfamily.

The protein localises to the cytoplasm. It carries out the reaction DNA(n) + a 2'-deoxyribonucleoside 5'-triphosphate = DNA(n+1) + diphosphate. Its function is as follows. DNA polymerase involved in damage-induced mutagenesis and translesion synthesis (TLS). It is not the major replicative DNA polymerase. The sequence is that of Error-prone DNA polymerase from Brucella suis biovar 1 (strain 1330).